A 278-amino-acid chain; its full sequence is Protein U52 (278 aa).

Positions 1–18 (MTRVSSVSASCTTTNPPK) are enriched in polar residues. The segment at 1–25 (MTRVSSVSASCTTTNPPKNTREDMS) is disordered.

The protein belongs to the herpesviridae UL79 family.

This Elephas maximus (Indian elephant) protein is Protein U52.